We begin with the raw amino-acid sequence, 210 residues long: NAD(P)H-quinone oxidoreductase subunit I (210 aa).

4Fe-4S ferredoxin-type domains lie at 55 to 84 (GRIHYEFDKCIACEVCVRVCPINLPVVDWV) and 95 to 124 (RNYSIDFGVCIFCGNCVEYCPTNCLSMTEE). 8 residues coordinate [4Fe-4S] cluster: C64, C67, C70, C74, C104, C107, C110, and C114.

This sequence belongs to the complex I 23 kDa subunit family. In terms of assembly, NDH-1 is composed of at least 11 different subunits. Requires [4Fe-4S] cluster as cofactor.

The protein resides in the cellular thylakoid membrane. The enzyme catalyses a plastoquinone + NADH + (n+1) H(+)(in) = a plastoquinol + NAD(+) + n H(+)(out). It catalyses the reaction a plastoquinone + NADPH + (n+1) H(+)(in) = a plastoquinol + NADP(+) + n H(+)(out). NDH-1 shuttles electrons from an unknown electron donor, via FMN and iron-sulfur (Fe-S) centers, to quinones in the respiratory and/or the photosynthetic chain. The immediate electron acceptor for the enzyme in this species is believed to be plastoquinone. Couples the redox reaction to proton translocation, and thus conserves the redox energy in a proton gradient. The protein is NAD(P)H-quinone oxidoreductase subunit I of Synechococcus sp. (strain CC9902).